Consider the following 254-residue polypeptide: NH(3)-dependent NAD(+) synthetase (254 aa).

32 to 39 (GISGGVDS) contributes to the ATP binding site. Mg(2+) is bound at residue D38. R113 serves as a coordination point for deamido-NAD(+). An ATP-binding site is contributed by T133. Residue E138 participates in Mg(2+) binding. The deamido-NAD(+) site is built by K146 and D153. ATP-binding residues include K162 and S184. A deamido-NAD(+)-binding site is contributed by 244–245 (HK).

It belongs to the NAD synthetase family. In terms of assembly, homodimer.

The catalysed reaction is deamido-NAD(+) + NH4(+) + ATP = AMP + diphosphate + NAD(+) + H(+). The protein operates within cofactor biosynthesis; NAD(+) biosynthesis; NAD(+) from deamido-NAD(+) (ammonia route): step 1/1. Its function is as follows. Catalyzes the ATP-dependent amidation of deamido-NAD to form NAD. Uses ammonia as a nitrogen source. The sequence is that of NH(3)-dependent NAD(+) synthetase from Thermococcus sibiricus (strain DSM 12597 / MM 739).